Reading from the N-terminus, the 493-residue chain is Putative MgpC-like protein MPN_414 (493 aa).

Positions 1-14 (MKPTSLPKNFTNNP) are enriched in polar residues. Disordered stretches follow at residues 1–92 (MKPT…GHNS) and 441–493 (KSAR…SGNH). 2 stretches are compositionally biased toward basic and acidic residues: residues 25-34 (DNGRAYRKLN) and 44-56 (DSTKDGKGKDKDG). Composition is skewed to polar residues over residues 72-92 (VSSTGSQMSAVTDSQQSGHNS) and 445-472 (ENAQSTSDDNSNTKVKWTKPPRTTSPCR). The span at 482 to 493 (RVTEEERSSGNH) shows a compositional bias: basic and acidic residues.

Belongs to the MgpC family.

This Mycoplasma pneumoniae (strain ATCC 29342 / M129 / Subtype 1) (Mycoplasmoides pneumoniae) protein is Putative MgpC-like protein MPN_414.